The sequence spans 173 residues: MIEKRNIFLVGPMGAGKSTIGRQLAQQLSMEFFDSDKEIERCTGADISWIFDLEGEQGFRYREEILINQLTEKKGIVLATGGGSIKSKETRNVLSARGVVIYLETSIEKQLIRTQRDKKRPLLQSVGQCPQFFQTLAKERNPLYEEIADIIIPTEDHSFKIVAKKIIHLLEKP.

ATP is bound at residue 14 to 19 (GAGKST). Position 18 (S18) interacts with Mg(2+). 3 residues coordinate substrate: D36, R60, and G82. Residue R120 participates in ATP binding. R140 contributes to the substrate binding site.

Belongs to the shikimate kinase family. Monomer. The cofactor is Mg(2+).

It localises to the cytoplasm. It carries out the reaction shikimate + ATP = 3-phosphoshikimate + ADP + H(+). The protein operates within metabolic intermediate biosynthesis; chorismate biosynthesis; chorismate from D-erythrose 4-phosphate and phosphoenolpyruvate: step 5/7. Functionally, catalyzes the specific phosphorylation of the 3-hydroxyl group of shikimic acid using ATP as a cosubstrate. The sequence is that of Shikimate kinase 1 from Hamiltonella defensa subsp. Acyrthosiphon pisum (strain 5AT).